We begin with the raw amino-acid sequence, 416 residues long: Coenzyme F420H(2) oxidase (416 aa).

Fe cation contacts are provided by His87, Glu89, Asp91, His92, His155, Asp174, and His239. The Flavodoxin-like domain occupies 266-407 (AVIVYDTMHY…NCYNMGKELA (142 aa)). FMN contacts are provided by residues 272 to 277 (TMHYST), 324 to 327 (TIYD), and 359 to 364 (SMGGEG).

This sequence in the N-terminal section; belongs to the zinc metallo-hydrolase group 3 family. Requires FMN as cofactor. It depends on Fe cation as a cofactor.

The enzyme catalyses 2 reduced coenzyme F420-(gamma-L-Glu)(n) + O2 = 2 oxidized coenzyme F420-(gamma-L-Glu)(n) + 2 H2O + 2 H(+). Functionally, catalyzes the oxidation of F420H(2) with O(2). May be involved in O(2) detoxification, reducing the intracellular O(2) concentration to a level allowing growth at the expense of methane formation. This is Coenzyme F420H(2) oxidase (fprA) from Methanocaldococcus jannaschii (strain ATCC 43067 / DSM 2661 / JAL-1 / JCM 10045 / NBRC 100440) (Methanococcus jannaschii).